We begin with the raw amino-acid sequence, 390 residues long: MVTVEEVRRAQRAEGPATVLAIGTATPANCVDQSTYPDYYFRITNSEHMTELKEKFKRMCDKSNIKRRYMHLTEEILKENPAMCEYMAPSLDARQDIVVVEVPRLGKEAAQKAIKEWGQPKSKITHLVFCTTSGVDMPGADYQLTKLLGLRPSVKRFMMYQQGCFAGGTVLRMAKDLAENNAGARVLVVCSEITAVTFRGPADTHLDSLVGQALFGDGAAAVIVGSDPVVGVERPLFQIVTAAQTLLPDSHGAIDGHLREVGLTFHLLKDVPGLISKNIEKSLKEAFDPLGISDWNSVFWIAHPGGPAILDQVEEKLGLKPEKLRSTRQVLSEYGNMSSACVLFILDEMRKSSAKEGMSTTGEGLDWGVLFGFGPGLTVETVVLHSVPLN.

Residue C164 is part of the active site.

Belongs to the thiolase-like superfamily. Chalcone/stilbene synthases family.

The enzyme catalyses (E)-4-coumaroyl-CoA + 3 malonyl-CoA + 3 H(+) = 2',4,4',6'-tetrahydroxychalcone + 3 CO2 + 4 CoA. The protein operates within secondary metabolite biosynthesis; flavonoid biosynthesis. Functionally, the primary product of this enzyme is 4,2',4',6'-tetrahydroxychalcone (also termed naringenin-chalcone or chalcone) which can under specific conditions spontaneously isomerize into naringenin. The sequence is that of Chalcone synthase (CHS) from Antirrhinum majus (Garden snapdragon).